The sequence spans 76 residues: Liver-expressed antimicrobial peptide 2 (76 aa).

Positions 1–22 are cleaved as a signal peptide; that stretch reads MLQLKLFAVLLTCLLLLGQVNS. The propeptide occupies 23 to 36; sequence SPVPEVSSAKRSRR. 2 disulfide bridges follow: Cys53–Cys64 and Cys59–Cys69.

Belongs to the LEAP2 family.

It is found in the secreted. Its function is as follows. Has an antimicrobial activity. This Mus musculus (Mouse) protein is Liver-expressed antimicrobial peptide 2 (Leap2).